We begin with the raw amino-acid sequence, 392 residues long: LL-diaminopimelate aminotransferase (392 aa).

5 residues coordinate substrate: Y15, G40, K104, Y128, and N178. Residues S103–K104, Y128, N178, Y209, and S237–S239 contribute to the pyridoxal 5'-phosphate site. K240 is modified (N6-(pyridoxal phosphate)lysine). Pyridoxal 5'-phosphate is bound at residue R248. Substrate is bound at residue R366.

Belongs to the class-I pyridoxal-phosphate-dependent aminotransferase family. LL-diaminopimelate aminotransferase subfamily. As to quaternary structure, homodimer. The cofactor is pyridoxal 5'-phosphate.

The enzyme catalyses (2S,6S)-2,6-diaminopimelate + 2-oxoglutarate = (S)-2,3,4,5-tetrahydrodipicolinate + L-glutamate + H2O + H(+). It functions in the pathway amino-acid biosynthesis; L-lysine biosynthesis via DAP pathway; LL-2,6-diaminopimelate from (S)-tetrahydrodipicolinate (aminotransferase route): step 1/1. Involved in the synthesis of meso-diaminopimelate (m-DAP or DL-DAP), required for both lysine and peptidoglycan biosynthesis. Catalyzes the direct conversion of tetrahydrodipicolinate to LL-diaminopimelate. This chain is LL-diaminopimelate aminotransferase, found in Desulforudis audaxviator (strain MP104C).